A 231-amino-acid polypeptide reads, in one-letter code: Large ribosomal subunit protein uL1 (231 aa).

This sequence belongs to the universal ribosomal protein uL1 family. In terms of assembly, part of the 50S ribosomal subunit.

Functionally, binds directly to 23S rRNA. The L1 stalk is quite mobile in the ribosome, and is involved in E site tRNA release. In terms of biological role, protein L1 is also a translational repressor protein, it controls the translation of the L11 operon by binding to its mRNA. The protein is Large ribosomal subunit protein uL1 of Acinetobacter baumannii (strain AB307-0294).